A 629-amino-acid polypeptide reads, in one-letter code: MQTYDAGTFDVIVVGAGHAGVEAGLASGRMGAKTLMLTINLDMVAFMPCNPSVGGPAKGVVVREIDALGGEMGRNTDKTYIQMRMLNTGKGPAVRALRAQADKWDYQHEMKHTIEKEENITLRQGLVDRLVIEDGVCKGVITNSGAIYYAKTVVITTGTFSRGEIIVGELRYSSGPNNQQPSVKLSEHLEELGFELRRFKTGTPPRVKSSTIDYSKTEEQPGDDHPRAFSFDTVEMLLDQLPCWLTYTNETTHEIIQANLHRSPMFTATKKGTGARYCPSIEDKIVRFSDKPRHQIFLEPEGKNTEEVYVQGLSTSLPEEVQREMLRTIPGLENVEMMRVGYAIEYDAVMPDQLWPSLETKLVEGLFTAGQINGTSGYEEAAGQGLMAGINAARKVFEKEPVILGRDQAYIGVLIDDLVTKGTEEPYRLLTSRAEYRLLLRHDNADLRLTEIGHEIGLISDERYERFLAKQSAIEAEKERLQKTRIKPTAEVQAMLKEIGSGELKDGILAADLLRRPEITYDKIAQIVSRETFVTDEIAEQVEIQIKYEGYIQKSNLQVEKMKRMEDKKIPENIDYDAISGLATEALEKLKKIEPLSIAQASRISGVNPADISILLVYIEQGKIAKISK.

Residues 15 to 20, Val-127, and Ser-182 contribute to the FAD site; that span reads GAGHAG. The segment at 203 to 226 is disordered; it reads TPPRVKSSTIDYSKTEEQPGDDHP. Positions 215 to 226 are enriched in basic and acidic residues; that stretch reads SKTEEQPGDDHP. 274–288 contributes to the NAD(+) binding site; the sequence is GARYCPSIEDKIVRF. Gln-371 is a binding site for FAD.

This sequence belongs to the MnmG family. In terms of assembly, homodimer. Heterotetramer of two MnmE and two MnmG subunits. Requires FAD as cofactor.

It localises to the cytoplasm. Functionally, NAD-binding protein involved in the addition of a carboxymethylaminomethyl (cmnm) group at the wobble position (U34) of certain tRNAs, forming tRNA-cmnm(5)s(2)U34. In Listeria monocytogenes serovar 1/2a (strain ATCC BAA-679 / EGD-e), this protein is tRNA uridine 5-carboxymethylaminomethyl modification enzyme MnmG.